The chain runs to 103 residues: Large ribosomal subunit protein uL24 (103 aa).

It belongs to the universal ribosomal protein uL24 family. Part of the 50S ribosomal subunit.

In terms of biological role, one of two assembly initiator proteins, it binds directly to the 5'-end of the 23S rRNA, where it nucleates assembly of the 50S subunit. Its function is as follows. One of the proteins that surrounds the polypeptide exit tunnel on the outside of the subunit. The chain is Large ribosomal subunit protein uL24 from Dehalococcoides mccartyi (strain ATCC BAA-2266 / KCTC 15142 / 195) (Dehalococcoides ethenogenes (strain 195)).